A 277-amino-acid polypeptide reads, in one-letter code: F41 fimbrial protein (277 aa).

The first 22 residues, 1-22, serve as a signal peptide directing secretion; sequence MKKTLIALAVAASAAVSGSVMA.

It belongs to the fimbrial K88 protein family.

It is found in the fimbrium. In terms of biological role, fimbriae (also called pili), polar filaments radiating from the surface of the bacterium to a length of 0.5-1.5 micrometers and numbering 100-300 per cell, enable bacteria to colonize the epithelium of specific host organs. This is F41 fimbrial protein (FimF41a) from Escherichia coli.